The primary structure comprises 669 residues: Hypoxia-inducible factor 3-alpha (669 aa).

The interval 1-27 is disordered; the sequence is MALGLQRARSTTELRKEKSRDAARSRR. Over residues 10 to 27 the composition is skewed to basic and acidic residues; the sequence is STTELRKEKSRDAARSRR. The bHLH domain occupies 14-67; that stretch reads LRKEKSRDAARSRRSQETEVLYQLAHTLPFARGVSAHLDKASIMRLTISYLRMH. Positions 77-100 are nuclear localization signal; it reads QVGAGGEPLDACYLKALEGFVMVL. PAS domains are found at residues 82 to 154 and 227 to 297; these read GEPL…LSRR and PHPG…LSKG. Positions 230–274 are nuclear export signal; the sequence is GSLEPPLGRGAFLSRHSLDMKFTYCDDRIAEVAGYSPDDLIGCSA. A disordered region spans residues 354 to 389; sequence EQTEQHSRRPIQRGAPSQKDTPNPGDSLDTPGPRIL. The LRRLL motif lies at 414-418; it reads LRRLL. The segment covering 430–444 has biased composition (polar residues); it reads TPSTPLATRHPQSPL. The tract at residues 430–451 is disordered; the sequence is TPSTPLATRHPQSPLSADLPDE. The tract at residues 452–581 is ODD; that stretch reads LPVGTENVHR…TLAQSSEDED (130 aa). Residues 454-506 are NTAD; it reads VGTENVHRLFTSGKDTEAVETDLDIAQDADALDLEMLAPYISMDDDFQLNASE. K467 is covalently cross-linked (Glycyl lysine isopeptide (Lys-Gly) (interchain with G-Cter in ubiquitin)). The short motif at 490 to 497 is the LAPYISMD element; that stretch reads LAPYISMD. P492 bears the 4-hydroxyproline mark. Disordered regions lie at residues 523 to 600 and 619 to 669; these read RARS…SPEH and APGS…AQAD. 2 stretches are compositionally biased toward low complexity: residues 530-541 and 550-564; these read LSPPALEPSLLP and SCSSPSRGDPSASSP. Residue K570 forms a Glycyl lysine isopeptide (Lys-Gly) (interchain with G-Cter in ubiquitin) linkage. A compositionally biased stretch (low complexity) spans 629–646; that stretch reads PLLNLNEPLGLGPSLLSP.

In terms of assembly, isoform 2 interacts (via ODD domain) with VHL (via beta domain). Isoform 4 interacts with HIF1A; the interaction inhibits the binding of HIF1A to hypoxia-responsive element (HRE) and HIF1A/ARNT-dependent transcriptional activation. Isoform 4 interacts with ARNT; the interaction occurs in a HIF1A- and DNA-binding-independent manner and does not induce HIF1A/ARNT-dependent transcriptional activation. Isoform 4 interacts with EPAS1. Interacts with BAD, BCL2L2 and MCL1. In terms of processing, in normoxia, hydroxylated on Pro-492 in the oxygen-dependent degradation domain (ODD) by prolyl hydroxylase(s) (PHD). The hydroxylated proline promotes interaction with VHL, initiating rapid ubiquitination and subsequent proteasomal degradation. Ubiquitinated; ubiquitination occurs in a VHL- and oxygen-dependent pathway and subsequently targeted for proteasomal degradation. In terms of tissue distribution, expressed in vascular cells (at protein level). Expressed in kidney. Expressed in lung epithelial cells. Expressed in endothelial cells (venous and arterial cells from umbilical cord and aortic endothelial cells) and in vascular smooth muscle cells (aorta). Strongly expressed in the heart, placenta, and skeletal muscle, whereas a weak expression profile was found in the lung, liver, and kidney. Expressed weakly in cell renal cell carcinoma (CC-RCC) compared to normal renal cells. Expression is down-regulated in numerous kidney tumor cells compared to non tumor kidney tissues. Isoform 2 is expressed in heart, placenta, lung, liver, skeletal muscle and pancreas and in numerous cancer cell lines. Isoform 3 and isoform 4 are weakly expressed in heart, placenta, lung, liver, skeletal muscle and pancreas. Isoform 4 is expressed in fetal tissues, such as heart, brain, thymus, lung, liver, skeletal kidney and spleen. Isoform 3 is weakly expressed in fetal tissues, such as liver and kidney.

The protein localises to the nucleus. It localises to the cytoplasm. Its subcellular location is the nucleus speckle. It is found in the mitochondrion. Functionally, acts as a transcriptional regulator in adaptive response to low oxygen tension. Acts as a regulator of hypoxia-inducible gene expression. Functions as an inhibitor of angiogenesis in hypoxic cells of the cornea. Plays a role in the development of the cardiorespiratory system. May also be involved in apoptosis. Its function is as follows. Attenuates the ability of transcription factor HIF1A to bind to hypoxia-responsive elements (HRE) located within the enhancer/promoter of hypoxia-inducible target genes and hence inhibits HRE-driven transcriptional activation. Also inhibits hypoxia-inducible ARNT-mediated gene expression. Attenuates the ability of transcription factor HIF1A to bind to hypoxia-responsive elements (HRE) located within the enhancer/promoter of hypoxia-inducible target genes and hence inhibits HRE-driven transcriptional activation. In terms of biological role, attenuates the ability of transcription factor HIF1A and EPAS1/HIF2A to bind to hypoxia-responsive elements (HRE) located within the enhancer/promoter of hypoxia-inducible target genes and hence inhibits HRE-driven transcriptional activation. May act as a tumor suppressor and inhibits malignant cell transformation. This is Hypoxia-inducible factor 3-alpha from Homo sapiens (Human).